The following is a 71-amino-acid chain: Prophage lysis protein S homolog EssD (71 aa).

It belongs to the lambda phage S protein family.

The sequence is that of Prophage lysis protein S homolog EssD (essD) from Escherichia coli (strain K12).